A 604-amino-acid polypeptide reads, in one-letter code: ATPase family AAA domain-containing protein 3A homolog (604 aa).

The interval 1 to 50 is disordered; sequence MSWLLGRNRQQPQPDQTAGFSEGGGAADPEGRTAGEKSGDSQLSRAERKA. Over residues 8-19 the composition is skewed to polar residues; that stretch reads NRQQPQPDQTAG. Over residues 29–50 the composition is skewed to basic and acidic residues; that stretch reads PEGRTAGEKSGDSQLSRAERKA. The stretch at 62-221 forms a coiled coil; it reads ERAADAAKTL…INLEKIRLKA (160 aa). An ATP-binding site is contributed by 358–365; that stretch reads GPPGTGKT.

Can form homooligomers.

The protein resides in the mitochondrion inner membrane. Its subcellular location is the mitochondrion matrix. The protein localises to the mitochondrion nucleoid. In terms of biological role, required to maintain the proper number of mitochondria in neurons and muscles. This is ATPase family AAA domain-containing protein 3A homolog from Drosophila melanogaster (Fruit fly).